The chain runs to 411 residues: MTAQTPIHVYSEIGKLKKVLLHRPGKEIENLMPDYLERLLFDDIPFLEDAQKEHDAFAQALRDEGIEVLDLETLAAESLGTPEIREAFIDEYLSEANIRGRATKKAIRELLMAIEDNQELIEKTMAGVQKSELPEIPASEKGLTDLVESNYPFAIDPMPNLYFTRDPFATIGTGVSLNHMFSETRNRETLYGKYIFTHHPIYGGGKVPMVYDRNETTRIEGGDELVLSKDVLAVGISQRTDAASIEKLLVNIFKQNLGFKKVLAFEFANNRKFMHLDTVFTMVDYDKFTIHPEIEGDLRVYSVTYDNEELHIVEEKGDLAELLAANLGVEKVDLIRCGGDNLVAAGREQWNDGSNTLTIAPGVVVVYNRNTITNAILESKGLKLIKIHGSELVRGRGGPRCMSMPFEREDI.

C401 acts as the Amidino-cysteine intermediate in catalysis.

The protein belongs to the arginine deiminase family.

It is found in the cytoplasm. It carries out the reaction L-arginine + H2O = L-citrulline + NH4(+). It functions in the pathway amino-acid degradation; L-arginine degradation via ADI pathway; carbamoyl phosphate from L-arginine: step 1/2. This Streptococcus pyogenes serotype M49 (strain NZ131) protein is Arginine deiminase.